A 379-amino-acid polypeptide reads, in one-letter code: Glutamate 5-kinase (379 aa).

Lysine 17 provides a ligand contact to ATP. Residues serine 57, aspartate 144, and asparagine 156 each contribute to the substrate site. An ATP-binding site is contributed by 176–177; the sequence is SD. One can recognise a PUA domain in the interval 282-359; it reads SGILMIDQGA…EEIESILGYE (78 aa).

The protein belongs to the glutamate 5-kinase family.

The protein resides in the cytoplasm. The enzyme catalyses L-glutamate + ATP = L-glutamyl 5-phosphate + ADP. Its pathway is amino-acid biosynthesis; L-proline biosynthesis; L-glutamate 5-semialdehyde from L-glutamate: step 1/2. Catalyzes the transfer of a phosphate group to glutamate to form L-glutamate 5-phosphate. The protein is Glutamate 5-kinase of Bartonella henselae (strain ATCC 49882 / DSM 28221 / CCUG 30454 / Houston 1) (Rochalimaea henselae).